Reading from the N-terminus, the 484-residue chain is MVRVELQAASLMNGSSAAEEPQDALVGGDACGGRRPPSVLGVRLAVPEWEVAVTAVSLSLIILITIVGNVLVVLSVFTYKPLRIVQNFFIVSLAVADLTVAVLVMPFNVAYSLIQRWVFGIVVCKMWLTCDVLCCTASILNLCAIALDRYWAITDPINYAQKRTLRRVLAMIAGVWLLSGVISSPPLIGWNDWPMEFNDTTPCQLTEEQGYVIYSSLGSFFIPLFIMTIVYVEIFIATKRRLRERAKASKLNSAMKQQMAAQAVPSSVPSHDQESVSSETNHNELPPPPAPPSKEKRRKTKKKSKKKDQAAEEGRFLAPAMVAEDSVTDNSVSVGPVAKNHLAEDGYTCTTTTTTTTTTTAVTDSPRSRTASQKGSTAPPTPVQPKSIPVYQFIEEKQRISLSKERRAARTLGIIMGVFVVCWLPFFLMYVIVPFCNPSCKPSPKLVNFITWLGYINSALNPIIYTIFNLDFRRAFKKLLHFKT.

The Extracellular segment spans residues 1–54; the sequence is MVRVELQAASLMNGSSAAEEPQDALVGGDACGGRRPPSVLGVRLAVPEWEVAVT. N13 carries an N-linked (GlcNAc...) asparagine glycan. Residues 55–77 form a helical membrane-spanning segment; that stretch reads AVSLSLIILITIVGNVLVVLSVF. Residues 78-87 are Cytoplasmic-facing; sequence TYKPLRIVQN. The helical transmembrane segment at 88–109 threads the bilayer; the sequence is FFIVSLAVADLTVAVLVMPFNV. Residues 110–126 lie on the Extracellular side of the membrane; the sequence is AYSLIQRWVFGIVVCKM. Cysteines 124 and 203 form a disulfide. A helical membrane pass occupies residues 127–147; it reads WLTCDVLCCTASILNLCAIAL. Residues 148–167 lie on the Cytoplasmic side of the membrane; that stretch reads DRYWAITDPINYAQKRTLRR. A helical membrane pass occupies residues 168–190; the sequence is VLAMIAGVWLLSGVISSPPLIGW. The Extracellular portion of the chain corresponds to 191-215; that stretch reads NDWPMEFNDTTPCQLTEEQGYVIYS. N-linked (GlcNAc...) asparagine glycosylation occurs at N198. Residues 216-237 form a helical membrane-spanning segment; sequence SLGSFFIPLFIMTIVYVEIFIA. The Cytoplasmic portion of the chain corresponds to 238–411; it reads TKRRLRERAK…LSKERRAART (174 aa). Residues 253-280 show a composition bias toward polar residues; the sequence is SAMKQQMAAQAVPSSVPSHDQESVSSET. Disordered regions lie at residues 253 to 322 and 350 to 383; these read SAMK…PAMV and TTTT…PTPV. The span at 295 to 306 shows a compositional bias: basic residues; that stretch reads EKRRKTKKKSKK. The segment covering 350-360 has biased composition (low complexity); sequence TTTTTTTTTTT. A compositionally biased stretch (polar residues) spans 361–378; that stretch reads AVTDSPRSRTASQKGSTA. Residues 412–433 form a helical membrane-spanning segment; the sequence is LGIIMGVFVVCWLPFFLMYVIV. Residues 434–448 are Extracellular-facing; it reads PFCNPSCKPSPKLVN. Residues 449 to 470 form a helical membrane-spanning segment; it reads FITWLGYINSALNPIIYTIFNL. Residues 471–484 are Cytoplasmic-facing; the sequence is DFRRAFKKLLHFKT.

Belongs to the G-protein coupled receptor 1 family.

It localises to the cell membrane. Functionally, G-protein coupled receptor for tyramine, a known neurotransmitter and neuromodulator and direct precursor of octopamine. The sequence is that of Putative tyramine receptor 2 (GCR2) from Locusta migratoria (Migratory locust).